The primary structure comprises 528 residues: GMP synthase [glutamine-hydrolyzing] (528 aa).

A Glutamine amidotransferase type-1 domain is found at 13-204 (AIVILDFGSQ…VYHICGCEPD (192 aa)). The active-site Nucleophile is the Cys90. Catalysis depends on residues His178 and Glu180. The GMPS ATP-PPase domain maps to 205–403 (WTTEAFIDEA…LGLPEEIVSR (199 aa)). Residue 232–238 (SGGVDSS) coordinates ATP.

Homodimer.

The catalysed reaction is XMP + L-glutamine + ATP + H2O = GMP + L-glutamate + AMP + diphosphate + 2 H(+). The protein operates within purine metabolism; GMP biosynthesis; GMP from XMP (L-Gln route): step 1/1. Its function is as follows. Catalyzes the synthesis of GMP from XMP. The protein is GMP synthase [glutamine-hydrolyzing] of Synechococcus sp. (strain CC9311).